Reading from the N-terminus, the 251-residue chain is Ubiquinone/menaquinone biosynthesis C-methyltransferase UbiE (251 aa).

Residues Thr74, Asp95, and 123 to 124 (NA) each bind S-adenosyl-L-methionine.

It belongs to the class I-like SAM-binding methyltransferase superfamily. MenG/UbiE family.

It carries out the reaction a 2-demethylmenaquinol + S-adenosyl-L-methionine = a menaquinol + S-adenosyl-L-homocysteine + H(+). The catalysed reaction is a 2-methoxy-6-(all-trans-polyprenyl)benzene-1,4-diol + S-adenosyl-L-methionine = a 5-methoxy-2-methyl-3-(all-trans-polyprenyl)benzene-1,4-diol + S-adenosyl-L-homocysteine + H(+). The protein operates within quinol/quinone metabolism; menaquinone biosynthesis; menaquinol from 1,4-dihydroxy-2-naphthoate: step 2/2. It functions in the pathway cofactor biosynthesis; ubiquinone biosynthesis. Methyltransferase required for the conversion of demethylmenaquinol (DMKH2) to menaquinol (MKH2) and the conversion of 2-polyprenyl-6-methoxy-1,4-benzoquinol (DDMQH2) to 2-polyprenyl-3-methyl-6-methoxy-1,4-benzoquinol (DMQH2). The sequence is that of Ubiquinone/menaquinone biosynthesis C-methyltransferase UbiE from Marinomonas sp. (strain MWYL1).